Reading from the N-terminus, the 1223-residue chain is DNA-directed RNA polymerase II subunit RPB2 (1223 aa).

The segment at M1–N20 is disordered. Position 836 (D836) interacts with Mg(2+). Zn(2+) is bound by residues C1162, C1165, C1181, and C1184. Residues C1162–C1184 form a C4-type zinc finger.

The protein belongs to the RNA polymerase beta chain family. In terms of assembly, component of the RNA polymerase II (Pol II) complex consisting of 12 subunits.

It localises to the nucleus. The enzyme catalyses RNA(n) + a ribonucleoside 5'-triphosphate = RNA(n+1) + diphosphate. Functionally, DNA-dependent RNA polymerase catalyzes the transcription of DNA into RNA using the four ribonucleoside triphosphates as substrates. Second largest component of RNA polymerase II which synthesizes mRNA precursors and many functional non-coding RNAs. Proposed to contribute to the polymerase catalytic activity and forms the polymerase active center together with the largest subunit. Pol II is the central component of the basal RNA polymerase II transcription machinery. It is composed of mobile elements that move relative to each other. RPB2 is part of the core element with the central large cleft, the clamp element that moves to open and close the cleft and the jaws that are thought to grab the incoming DNA template. This is DNA-directed RNA polymerase II subunit RPB2 (RPB2) from Candida glabrata (strain ATCC 2001 / BCRC 20586 / JCM 3761 / NBRC 0622 / NRRL Y-65 / CBS 138) (Yeast).